Consider the following 369-residue polypeptide: H-2 class I histocompatibility antigen, K-K alpha chain (369 aa).

The N-terminal stretch at 1 to 21 is a signal peptide; it reads MAPCMLLLLLAAALAPTQTRA. The alpha-1 stretch occupies residues 22 to 111; the sequence is GPHSLRYFHT…ALRYYNQSAG (90 aa). Over 22–305 the chain is Extracellular; that stretch reads GPHSLRYFHT…EPPPSTVSNT (284 aa). Asn107 is a glycosylation site (N-linked (GlcNAc...) asparagine). The interval 112–203 is alpha-2; that stretch reads GSHTFQRMYG…QLGNATLPRT (92 aa). Cys122 and Cys185 are oxidised to a cystine. A glycan (N-linked (GlcNAc...) asparagine) is linked at Asn197. The segment at 204–295 is alpha-3; sequence DSPKAHVTRH…GLPEPLTLRW (92 aa). The region spanning 206–294 is the Ig-like C1-type domain; it reads PKAHVTRHSR…QGLPEPLTLR (89 aa). Cys224 and Cys280 are disulfide-bonded. The connecting peptide stretch occupies residues 296–305; it reads EPPPSTVSNT. The chain crosses the membrane as a helical span at residues 306 to 328; the sequence is VIIAVLVVLGAAIVTGAVVAFVM. The Cytoplasmic segment spans residues 329-369; sequence KMRRRNTGGKGGDYALAPGSQTSDLSLPDCKVMVHDPHSLA. Residues Ser351 and Ser354 each carry the phosphoserine modification.

Belongs to the MHC class I family. In terms of assembly, heterodimer of an alpha chain and a beta chain (beta-2-microglobulin).

The protein localises to the membrane. Involved in the presentation of foreign antigens to the immune system. The sequence is that of H-2 class I histocompatibility antigen, K-K alpha chain (H2-K1) from Mus musculus (Mouse).